A 331-amino-acid chain; its full sequence is ADP-L-glycero-D-manno-heptose-6-epimerase (331 aa).

NADP(+) contacts are provided by residues 11 to 12 (FI), 32 to 33 (DN), Lys39, Lys54, 75 to 79 (EGACS), and Asn92. Tyr139 functions as the Proton acceptor in the catalytic mechanism. An NADP(+)-binding site is contributed by Lys143. A substrate-binding site is contributed by Asn168. Val169 and Lys177 together coordinate NADP(+). Lys177 functions as the Proton acceptor in the catalytic mechanism. Residues Arg179, His186, 200-203 (FGEY), Arg213, and Tyr292 contribute to the substrate site.

Belongs to the NAD(P)-dependent epimerase/dehydratase family. HldD subfamily. In terms of assembly, homopentamer. Requires NADP(+) as cofactor.

It catalyses the reaction ADP-D-glycero-beta-D-manno-heptose = ADP-L-glycero-beta-D-manno-heptose. It functions in the pathway nucleotide-sugar biosynthesis; ADP-L-glycero-beta-D-manno-heptose biosynthesis; ADP-L-glycero-beta-D-manno-heptose from D-glycero-beta-D-manno-heptose 7-phosphate: step 4/4. In terms of biological role, catalyzes the interconversion between ADP-D-glycero-beta-D-manno-heptose and ADP-L-glycero-beta-D-manno-heptose via an epimerization at carbon 6 of the heptose. This chain is ADP-L-glycero-D-manno-heptose-6-epimerase, found in Cupriavidus metallidurans (strain ATCC 43123 / DSM 2839 / NBRC 102507 / CH34) (Ralstonia metallidurans).